We begin with the raw amino-acid sequence, 538 residues long: Chaperonin GroEL (538 aa).

ATP-binding positions include 29–32 (TLGP), 86–90 (DGTTT), Gly-413, 479–481 (DAL), and Asp-495.

This sequence belongs to the chaperonin (HSP60) family. As to quaternary structure, forms a cylinder of 14 subunits composed of two heptameric rings stacked back-to-back. Interacts with the co-chaperonin GroES.

Its subcellular location is the cytoplasm. It carries out the reaction ATP + H2O + a folded polypeptide = ADP + phosphate + an unfolded polypeptide.. Together with its co-chaperonin GroES, plays an essential role in assisting protein folding. The GroEL-GroES system forms a nano-cage that allows encapsulation of the non-native substrate proteins and provides a physical environment optimized to promote and accelerate protein folding. The polypeptide is Chaperonin GroEL (Thermotoga petrophila (strain ATCC BAA-488 / DSM 13995 / JCM 10881 / RKU-1)).